Here is a 204-residue protein sequence, read N- to C-terminus: Mediator of RNA polymerase II transcription subunit 31 (204 aa).

Residues Gln-134 to Asn-204 are disordered. Residues Ser-161 to Ala-194 show a composition bias toward low complexity.

This sequence belongs to the Mediator complex subunit 31 family. In terms of assembly, component of the Mediator complex, which includes at least MED4, MED6, MED14, MED17, MED18, MED20, MED21, MED23, MED24, MED27, MED30 and MED31.

It is found in the nucleus. Its function is as follows. Component of the Mediator complex, a coactivator involved in the regulated transcription of nearly all RNA polymerase II-dependent genes. Mediator functions as a bridge to convey information from gene-specific regulatory proteins to the basal RNA polymerase II transcription machinery. Mediator is recruited to promoters by direct interactions with regulatory proteins and serves as a scaffold for the assembly of a functional preinitiation complex with RNA polymerase II and the general transcription factors. Required for activated transcription of the MtnA gene. The protein is Mediator of RNA polymerase II transcription subunit 31 (MED31) of Drosophila melanogaster (Fruit fly).